The primary structure comprises 510 residues: Abscisic acid 8'-hydroxylase 2 (510 aa).

The chain crosses the membrane as a helical span at residues 3–23 (FLLFFVFVTAAVLCFVVPAFL). Residue C441 coordinates heme.

Belongs to the cytochrome P450 family. It depends on heme as a cofactor.

Its subcellular location is the membrane. It carries out the reaction 2-cis-(+)-abscisate + reduced [NADPH--hemoprotein reductase] + O2 = (+)-8'-hydroxyabscisate + oxidized [NADPH--hemoprotein reductase] + H2O + H(+). It functions in the pathway plant hormone degradation; abscisic acid degradation. In terms of biological role, involved in the oxidative degradation of abscisic acid. The protein is Abscisic acid 8'-hydroxylase 2 (CYP707A6) of Oryza sativa subsp. japonica (Rice).